The chain runs to 667 residues: MATVAPPADQATDLLQKLSLDSPAKASEIPEPNKKTAVYQYGGVDVHGQVPSYDRSLTPMLPSDAADPSVCYVPNPYNPYQYYNVYGSGQEWTDYPAYTNPEGVDMNSGIYGENGTVVYPQGYGYAAYPYSPATSPAPQLGGEGQLYGAQQYQYPNYFPNSGPYASSVATPTQPDLSANKPAGVKTLPADSNNVASAAGITKGSNGSAPVKPTNQATLNTSSNLYGMGAPGGGLAAGYQDPRYAYEGYYAPVPWHDGSKYSDVQRPVSGSGVASSYSKSSTVPSSRNQNYRSNSHYTSVHQPSSVTGYGTAQGYYNRMYQNKLYGQYGSTGRSALGYGSSGYDSRTNGRGWAATDNKYRSWGRGNSYYYGNENNVDGLNELNRGPRAKGTKNQKGNLDDSLEVKEQTGESNVTEVGEADNTCVVPDREQYNKEDFPVDYANAMFFIIKSYSEDDVHKSIKYNVWASTPNGNKKLAAAYQEAQQKAGGCPIFLFFSVNASGQFVGLAEMTGPVDFNTNVEYWQQDKWTGSFPLKWHIVKDVPNSLLKHITLENNENKPVTNSRDTQEVKLEQGLKIVKIFKEHSSKTCILDDFSFYEVRQKTILEKKAKQTQKQVSEEKVTDEKKESATAESASKESPAAVQTSSDVKVAENGSVAKPVTGDVVANGC.

Disordered stretches follow at residues 264-305 (QRPV…PSSV) and 379-398 (NELNRGPRAKGTKNQKGNLD). A compositionally biased stretch (low complexity) spans 267–285 (VSGSGVASSYSKSSTVPSS). A compositionally biased stretch (polar residues) spans 286 to 305 (RNQNYRSNSHYTSVHQPSSV). The 138-residue stretch at 442–579 (AMFFIIKSYS…EQGLKIVKIF (138 aa)) folds into the YTH domain. RNA is bound by residues 448-450 (KSY), Asp-454, 464-465 (WA), Asn-497, Trp-521, Trp-526, and Trp-534. A disordered region spans residues 606-667 (KAKQTQKQVS…VTGDVVANGC (62 aa)). Positions 614 to 627 (VSEEKVTDEKKESA) are enriched in basic and acidic residues. A compositionally biased stretch (low complexity) spans 628–639 (TAESASKESPAA).

As to quaternary structure, interacts (via C-terminus) with CIPK1. Expressed in the shoot apex, at the sites of leaf formation, and in emerging leaves. Highly expressed in rapidly developing tissues.

Its subcellular location is the cytoplasm. It is found in the nucleus. Specifically recognizes and binds N6-methyladenosine (m6A)-containing RNAs, and regulates mRNA stability. M6A is a modification present at internal sites of mRNAs and some non-coding RNAs and plays a role in mRNA stability and processing. Binds preferentially in the 3'UTRs of target genes. May play dual roles in regulating 3'UTR processing in the nucleus and facilitating mRNA stability in the cytoplasm. Required for the correct timing of leaf formation and normal leaf morphology. Functions redundantly with ECT3. Required for proper trichome branching and morphology. Controls trichome morphology by binding transcripts related to trichome morphogenesis and affecting their stability. This is YTH domain-containing protein ECT2 from Arabidopsis thaliana (Mouse-ear cress).